A 518-amino-acid chain; its full sequence is Fusicoccin H C-9 hydroxylase (518 aa).

A helical transmembrane segment spans residues 12 to 29 (HLLLISTVIAVLAALIVS). Asparagine 81 and asparagine 168 each carry an N-linked (GlcNAc...) asparagine glycan. A heme-binding site is contributed by cysteine 456.

This sequence belongs to the cytochrome P450 family. The cofactor is heme.

The protein resides in the membrane. It functions in the pathway mycotoxin biosynthesis. In terms of biological role, cytochrome P450 monooxygenase; part of the 2 gene clusters that mediate the biosynthesis of fusicoccins, diterpene glucosides that display phytohormone-like activity and function as potent activators of plasma membrane H(+)-ATPases in plants by modifying 14-3-3 proteins and cause the plant disease constriction canker. The first step in the pathway is performed by the fusicoccadiene synthase PaFS that possesses both prenyl transferase and terpene cyclase activity, converting isopentenyl diphosphate and dimethylallyl diphosphate into geranylgeranyl diphosphate (GGDP) and successively converting GGDP into fusicocca-2,10(14)-diene, a precursor for fusicoccin H. The second step is the oxidation at the C-8 position by the cytochrome P450 monooxygenase PaP450-2 to yield fusicocca-2,10(14)-diene-8-beta-ol. The cytochrome P450 monooxygenase PaP450-1 then catalyzes the hydroxylation at the C-16 position to produce fusicocca-2,10(14)-diene-8-beta,16-diol. The dioxygenase fc-dox then catalyzes the 16-oxydation of fusicocca-2,10(14)-diene-8-beta,16-diol to yield an aldehyde (8-beta-hydroxyfusicocca-1,10(14)-dien-16-al). The short-chain dehydrogenase/reductase fc-sdr catalyzes the reduction of the aldehyde to yield fusicocca-1,10(14)-diene-8-beta,16-diol. The next step is the hydroxylation at C-9 performed by the cytochrome P450 monooxygenase PaP450-3 that leads to fusicoccin H aglycon which is glycosylated to fusicoccin H by the O-glycosyltransferase PaGT. Hydroxylation at C-12 by the cytochrome P450 monooxygenase PaP450-4 leads then to the production of fusicoccin Q and is followed by methylation by the O-methyltransferase PaMT to yield fusicoccin P. Fusicoccin P is further converted to fusicoccin J via prenylation by the O-glucose prenyltransferase PaPT. Cytochrome P450 monooxygenase PaP450-5 then performs hydroxylation at C-19 to yield dideacetyl-fusicoccin A which is acetylated to 3'-O-deacetyl-fusicoccin A by the O-acetyltransferase PaAT-2. Finally, a another acetylation by the O-acetyltransferase PaAT-1 yields fusicoccin A. The sequence is that of Fusicoccin H C-9 hydroxylase from Phomopsis amygdali (Fusicoccum amygdali).